A 171-amino-acid polypeptide reads, in one-letter code: uncharacterized protein (171 aa).

Positions 1 to 18 (MRYSKLTMLIPCALLLSA) are cleaved as a signal peptide. A lipid anchor (N-palmitoyl cysteine) is attached at Cys-19. Cys-19 carries the S-diacylglycerol cysteine lipid modification.

The protein localises to the cell membrane. This is an uncharacterized protein from Escherichia coli (strain K12).